A 304-amino-acid chain; its full sequence is Nod factor export ATP-binding protein I (304 aa).

Positions 6–236 (IDFQQVEKRY…EIGCDVIEIY (231 aa)) constitute an ABC transporter domain. ATP is bound at residue 38–45 (GPNGAGKT).

The protein belongs to the ABC transporter superfamily. Lipooligosaccharide exporter (TC 3.A.1.102) family. As to quaternary structure, the complex is composed of two ATP-binding proteins (NodI) and two transmembrane proteins (NodJ).

Its subcellular location is the cell inner membrane. Functionally, part of the ABC transporter complex NodIJ involved in the export of the nodulation factors (Nod factors), the bacterial signal molecules that induce symbiosis and subsequent nodulation induction. Nod factors are LCO (lipo-chitin oligosaccharide), a modified beta-1,4-linked N-acetylglucosamine oligosaccharide. This subunit is responsible for energy coupling to the transport system. This Burkholderia pseudomallei (strain K96243) protein is Nod factor export ATP-binding protein I.